Reading from the N-terminus, the 431-residue chain is Xaa-Arg dipeptidase (431 aa).

Belongs to the peptidase M20A family.

It carries out the reaction beta-alanyl-L-lysine + H2O = beta-alanine + L-lysine. The enzyme catalyses beta-alanyl-L-arginine + H2O = beta-alanine + L-arginine. The catalysed reaction is beta-alanyl-L-ornithine + H2O = beta-alanine + L-ornithine. It catalyses the reaction N(2)-(4-aminobutanoyl)-L-lysine + H2O = 4-aminobutanoate + L-lysine. It carries out the reaction N(2)-(4-aminobutanoyl)-L-arginine + H2O = 4-aminobutanoate + L-arginine. The enzyme catalyses N(2)-(4-aminobutanoyl)-L-ornithine + H2O = 4-aminobutanoate + L-ornithine. In terms of biological role, catalyzes the peptide bond hydrolysis in dipeptides having basic amino acids lysine, ornithine or arginine at C-terminus. Postulated to function in a metabolite repair mechanism by eliminating alternate dipeptide by-products formed during carnosine synthesis. The chain is Xaa-Arg dipeptidase from Mus musculus (Mouse).